Consider the following 181-residue polypeptide: ATP synthase subunit delta (181 aa).

It belongs to the ATPase delta chain family. F-type ATPases have 2 components, F(1) - the catalytic core - and F(0) - the membrane proton channel. F(1) has five subunits: alpha(3), beta(3), gamma(1), delta(1), epsilon(1). F(0) has three main subunits: a(1), b(2) and c(10-14). The alpha and beta chains form an alternating ring which encloses part of the gamma chain. F(1) is attached to F(0) by a central stalk formed by the gamma and epsilon chains, while a peripheral stalk is formed by the delta and b chains.

It is found in the cell membrane. Functionally, f(1)F(0) ATP synthase produces ATP from ADP in the presence of a proton or sodium gradient. F-type ATPases consist of two structural domains, F(1) containing the extramembraneous catalytic core and F(0) containing the membrane proton channel, linked together by a central stalk and a peripheral stalk. During catalysis, ATP synthesis in the catalytic domain of F(1) is coupled via a rotary mechanism of the central stalk subunits to proton translocation. In terms of biological role, this protein is part of the stalk that links CF(0) to CF(1). It either transmits conformational changes from CF(0) to CF(1) or is implicated in proton conduction. The sequence is that of ATP synthase subunit delta from Lacticaseibacillus casei (strain BL23) (Lactobacillus casei).